Consider the following 186-residue polypeptide: Shikimate kinase (186 aa).

An ATP-binding site is contributed by 15 to 20 (GAGKTT). Residue Thr-19 coordinates Mg(2+). Substrate contacts are provided by Asp-37, Arg-61, and Gly-83. Arg-121 contributes to the ATP binding site. Arg-140 contributes to the substrate binding site.

Belongs to the shikimate kinase family. In terms of assembly, monomer. Mg(2+) is required as a cofactor.

The protein localises to the cytoplasm. The enzyme catalyses shikimate + ATP = 3-phosphoshikimate + ADP + H(+). It functions in the pathway metabolic intermediate biosynthesis; chorismate biosynthesis; chorismate from D-erythrose 4-phosphate and phosphoenolpyruvate: step 5/7. Its function is as follows. Catalyzes the specific phosphorylation of the 3-hydroxyl group of shikimic acid using ATP as a cosubstrate. The chain is Shikimate kinase from Psychrobacter cryohalolentis (strain ATCC BAA-1226 / DSM 17306 / VKM B-2378 / K5).